The chain runs to 591 residues: NADP-dependent malic enzyme (591 aa).

Basic and acidic residues predominate over residues 1–10; it reads MESTLKEMRD. The segment at 1 to 26 is disordered; the sequence is MESTLKEMRDGASVLDMDPKSTVGGG. Residue tyrosine 139 is the Proton donor of the active site. Arginine 192 provides a ligand contact to NAD(+). Lysine 210 functions as the Proton acceptor in the catalytic mechanism. Residues glutamate 282, aspartate 283, and aspartate 306 each coordinate a divalent metal cation. Aspartate 306 lines the NAD(+) pocket. 335–351 is an NADP(+) binding site; sequence LFLGAGEAGTGIAELIA. Asparagine 447 contributes to the NAD(+) binding site.

Belongs to the malic enzymes family. As to quaternary structure, homotetramer. The cofactor is Mg(2+). Requires Mn(2+) as cofactor. MRNA found twofold higher in leaves and stems than in roots.

The protein localises to the cytoplasm. The enzyme catalyses (S)-malate + NADP(+) = pyruvate + CO2 + NADPH. It carries out the reaction oxaloacetate + H(+) = pyruvate + CO2. The sequence is that of NADP-dependent malic enzyme from Populus trichocarpa (Western balsam poplar).